The primary structure comprises 385 residues: Glycerol-3-phosphate dehydrogenase [NAD(+)] 1 (385 aa).

NAD(+) is bound by residues 29–34 (GSGNWG), Phe-121, Lys-144, and Ala-177. Lys-144 contacts substrate. Lys-232 serves as the catalytic Proton acceptor. NAD(+) is bound by residues Arg-296 and Gln-325. 296-297 (RN) is a binding site for substrate. A Phosphoserine modification is found at Ser-376. Phosphothreonine is present on Thr-382.

It belongs to the NAD-dependent glycerol-3-phosphate dehydrogenase family.

The protein resides in the cytoplasm. It carries out the reaction sn-glycerol 3-phosphate + NAD(+) = dihydroxyacetone phosphate + NADH + H(+). The chain is Glycerol-3-phosphate dehydrogenase [NAD(+)] 1 (gpd1) from Schizosaccharomyces pombe (strain 972 / ATCC 24843) (Fission yeast).